We begin with the raw amino-acid sequence, 312 residues long: tRNA dimethylallyltransferase (312 aa).

Position 15–22 (15–22 (GPTAAGKS)) interacts with ATP. 17-22 (TAAGKS) provides a ligand contact to substrate. The tract at residues 40–43 (DSMQ) is interaction with substrate tRNA.

It belongs to the IPP transferase family. As to quaternary structure, monomer. Mg(2+) serves as cofactor.

The catalysed reaction is adenosine(37) in tRNA + dimethylallyl diphosphate = N(6)-dimethylallyladenosine(37) in tRNA + diphosphate. Its function is as follows. Catalyzes the transfer of a dimethylallyl group onto the adenine at position 37 in tRNAs that read codons beginning with uridine, leading to the formation of N6-(dimethylallyl)adenosine (i(6)A). This is tRNA dimethylallyltransferase from Streptomyces avermitilis (strain ATCC 31267 / DSM 46492 / JCM 5070 / NBRC 14893 / NCIMB 12804 / NRRL 8165 / MA-4680).